Here is a 306-residue protein sequence, read N- to C-terminus: ATP-dependent (S)-NAD(P)H-hydrate dehydratase (306 aa).

In terms of domain architecture, YjeF C-terminal spans 4-300 (LIDLFKPMIP…NQISNGFEDL (297 aa)). (6S)-NADPHX is bound by residues Gly-104 and 157-163 (NFVEFKS). Residues 197–201 (KGKED) and 216–225 (GMPRRCGGQG) contribute to the ATP site. Asp-226 serves as a coordination point for (6S)-NADPHX.

The protein belongs to the NnrD/CARKD family. Mg(2+) is required as a cofactor.

The enzyme catalyses (6S)-NADHX + ATP = ADP + phosphate + NADH + H(+). It catalyses the reaction (6S)-NADPHX + ATP = ADP + phosphate + NADPH + H(+). Functionally, catalyzes the dehydration of the S-form of NAD(P)HX at the expense of ATP, which is converted to ADP. Together with NAD(P)HX epimerase, which catalyzes the epimerization of the S- and R-forms, the enzyme allows the repair of both epimers of NAD(P)HX, a damaged form of NAD(P)H that is a result of enzymatic or heat-dependent hydration. This chain is ATP-dependent (S)-NAD(P)H-hydrate dehydratase, found in Dictyostelium discoideum (Social amoeba).